The sequence spans 626 residues: Chaperone protein HtpG (626 aa).

Residues 1 to 339 (MSQNQETRGF…SNDLPLNVSR (339 aa)) form an a; substrate-binding region. The interval 340–555 (EILQDNKITA…NDQMTTQMAK (216 aa)) is b. The c stretch occupies residues 556-626 (LFAAAGQPVP…FIKRINKLLG (71 aa)).

Belongs to the heat shock protein 90 family. In terms of assembly, homodimer.

The protein resides in the cytoplasm. Functionally, molecular chaperone. Has ATPase activity. The chain is Chaperone protein HtpG from Haemophilus influenzae (strain ATCC 51907 / DSM 11121 / KW20 / Rd).